We begin with the raw amino-acid sequence, 1114 residues long: Proto-oncogene tyrosine-protein kinase receptor Ret (1114 aa).

An N-terminal signal peptide occupies residues 1-28 (MAKATSGAAGLRLLLLLLLPLLGKVALG). Positions 29–153 (LYFSRDAYWE…RVYFSFFNTS (125 aa)) are cadherin-like region 1 (CLD1). Over 29-635 (LYFSRDAYWE…QDPLCDELCR (607 aa)) the chain is Extracellular. The N-linked (GlcNAc...) asparagine glycan is linked to Asn-98. Cys-137 and Cys-142 are joined by a disulfide. The N-linked (GlcNAc...) asparagine glycan is linked to Asn-151. 2 disulfides stabilise this stretch: Cys-157/Cys-197 and Cys-166/Cys-243. One can recognise a Cadherin domain in the interval 168–272 (PETRPSFRIR…YDEDDSAPTF (105 aa)). Residues Glu-178 and Asn-179 each coordinate Ca(2+). N-linked (GlcNAc...) asparagine glycosylation occurs at Asn-199. Residues Asp-230, Glu-232, Asp-264, Glu-265, Asp-266, Asp-267, Ser-268, Asp-300, and Asp-302 each contribute to the Ca(2+) site. Residues 265 to 379 (EDDSAPTFPA…MQLAVLVNDS (115 aa)) form a cadherin-like region 3 (CLD3) region. N-linked (GlcNAc...) asparagine glycans are attached at residues Asn-336, Asn-343, Asn-361, Asn-367, and Asn-377. Asp-378 lines the Ca(2+) pocket. Residue Asn-394 is glycosylated (N-linked (GlcNAc...) asparagine). The cadherin-like region 4 (CLD4) stretch occupies residues 405-506 (PSTYSLSVSR…QAQLLVTVEG (102 aa)). A disulfide bridge connects residues Cys-426 and Cys-430. N-linked (GlcNAc...) asparagine glycans are attached at residues Asn-448 and Asn-468. 4 cysteine pairs are disulfide-bonded: Cys-449–Cys-478, Cys-515–Cys-531, Cys-519–Cys-541, and Cys-528–Cys-558. Asn-554 is a glycosylation site (N-linked (GlcNAc...) asparagine). Residues Thr-564, Cys-565, Asp-567, His-569, Glu-574, and Asp-584 each coordinate Ca(2+). Disulfide bonds link Cys-565–Cys-581, Cys-570–Cys-585, Cys-609–Cys-620, Cys-611–Cys-618, and Cys-630–Cys-634. The chain crosses the membrane as a helical span at residues 636-657 (TVIAAAVLFSFIVSVLLSAFCI). Residues 658–1114 (HCYHKFAHKP…AAKLMDTFDS (457 aa)) lie on the Cytoplasmic side of the membrane. Tyr-687 carries the phosphotyrosine; by autocatalysis modification. A glycan (O-linked (GlcNAc) serine) is linked at Ser-688. Residue Ser-696 is modified to Phosphoserine. Residues 724–1016 (LVLGKTLGEG…KMMVKRRDYL (293 aa)) form the Protein kinase domain. Residues 730–738 (LGEGEFGKV) and Lys-758 each bind ATP. 805-807 (EYA) contacts semaxanib. A phosphotyrosine; by autocatalysis mark is found at Tyr-806, Tyr-809, and Tyr-826. Asp-874 acts as the Proton acceptor in catalysis. Tyr-900, Tyr-905, Tyr-981, Tyr-1015, Tyr-1029, Tyr-1062, Tyr-1090, and Tyr-1096 each carry phosphotyrosine; by autocatalysis.

The protein belongs to the protein kinase superfamily. Tyr protein kinase family. As to quaternary structure, phosphorylated form interacts with the PBT domain of DOK2, DOK4 and DOK5. The phosphorylated form interacts with PLCG1 and GRB7. Interacts (not phosphorylated) with PTK2/FAK1 (via FERM domain). Extracellular cell-membrane anchored RET cadherin fragments form complex in neurons with reduced trophic status, preferentially at the contact sites between somas. Interacts with AIP in the pituitary gland; this interaction prevents the formation of the AIP-survivin complex. Interacts (inactive) with CBLC and CD2AP; dissociates upon activation by GDNF which increases CBLC:CD2AP interaction. It depends on Ca(2+) as a cofactor. Autophosphorylated on C-terminal tyrosine residues upon ligand stimulation. Post-translationally, proteolytically cleaved by caspase-3. The soluble RET kinase fragment is able to induce cell death. The extracellular cell-membrane anchored RET cadherin fragment accelerates cell adhesion in sympathetic neurons.

It localises to the cell membrane. Its subcellular location is the endosome membrane. The catalysed reaction is L-tyrosyl-[protein] + ATP = O-phospho-L-tyrosyl-[protein] + ADP + H(+). Its activity is regulated as follows. Repressed by 4-(3-hydroxyanilino)-quinolines derivatives, indolin-2-one-derivatives, 2-(alkylsulfanyl)-4-(3-thienyl) nicotinonitrile analogs, 3- and 4-substituted beta-carbolin-1-ones, vandetanib, motesanib, sorafenib (BAY 43-9006), cabozantinib (XL184), lenvatinib, sunitinib, nintedanib, and withaferin A (WA). Inactivation by sorafenib both reduces kinase activity and promotes lysosomal degradation. In terms of biological role, receptor tyrosine-protein kinase involved in numerous cellular mechanisms including cell proliferation, neuronal navigation, cell migration, and cell differentiation in response to glia cell line-derived growth family factors (GDNF, NRTN, ARTN, PSPN and GDF15). In contrast to most receptor tyrosine kinases, RET requires not only its cognate ligands but also coreceptors, for activation. GDNF ligands (GDNF, NRTN, ARTN, PSPN and GDF15) first bind their corresponding GDNFR coreceptors (GFRA1, GFRA2, GFRA3, GFRA4 and GFRAL, respectively), triggering RET autophosphorylation and activation, leading to activation of downstream signaling pathways, including the MAPK- and AKT-signaling pathways. Acts as a dependence receptor via the GDNF-GFRA1 signaling: in the presence of the ligand GDNF in somatotrophs within pituitary, promotes survival and down regulates growth hormone (GH) production, but triggers apoptosis in absence of GDNF. Required for the molecular mechanisms orchestration during intestine organogenesis via the ARTN-GFRA3 signaling: involved in the development of enteric nervous system and renal organogenesis during embryonic life, and promotes the formation of Peyer's patch-like structures, a major component of the gut-associated lymphoid tissue. Mediates, through interaction with GDF15-receptor GFRAL, GDF15-induced cell-signaling in the brainstem which triggers an aversive response, characterized by nausea, vomiting, and/or loss of appetite in response to various stresses. Modulates cell adhesion via its cleavage by caspase in sympathetic neurons and mediates cell migration in an integrin (e.g. ITGB1 and ITGB3)-dependent manner. Also active in the absence of ligand, triggering apoptosis through a mechanism that requires receptor intracellular caspase cleavage. Triggers the differentiation of rapidly adapting (RA) mechanoreceptors. Involved in the development of the neural crest. Regulates nociceptor survival and size. Phosphorylates PTK2/FAK1. Functionally, isoform 1 in complex with GFRAL induces higher activation of MAPK-signaling pathway than isoform 2 in complex with GFRAL. The chain is Proto-oncogene tyrosine-protein kinase receptor Ret from Homo sapiens (Human).